The primary structure comprises 113 residues: UPF0122 protein LSEI_1603 (113 aa).

The protein belongs to the UPF0122 family.

Its function is as follows. Might take part in the signal recognition particle (SRP) pathway. This is inferred from the conservation of its genetic proximity to ftsY/ffh. May be a regulatory protein. The chain is UPF0122 protein LSEI_1603 from Lacticaseibacillus paracasei (strain ATCC 334 / BCRC 17002 / CCUG 31169 / CIP 107868 / KCTC 3260 / NRRL B-441) (Lactobacillus paracasei).